Here is a 348-residue protein sequence, read N- to C-terminus: Selenide, water dikinase (348 aa).

The active site involves cysteine 17. ATP contacts are provided by residues lysine 20 and 47–49 (RAD). Residue aspartate 50 coordinates Mg(2+). ATP contacts are provided by residues aspartate 67, aspartate 90, and 138–140 (GHT). Aspartate 90 lines the Mg(2+) pocket. Aspartate 226 contacts Mg(2+).

Belongs to the selenophosphate synthase 1 family. Class I subfamily. Homodimer. Requires Mg(2+) as cofactor.

It catalyses the reaction hydrogenselenide + ATP + H2O = selenophosphate + AMP + phosphate + 2 H(+). Synthesizes selenophosphate from selenide and ATP. The chain is Selenide, water dikinase from Pelobacter propionicus (strain DSM 2379 / NBRC 103807 / OttBd1).